Consider the following 744-residue polypeptide: Tripartite motif-containing protein 2 (744 aa).

Ser-10 is modified (phosphoserine). The RING-type zinc finger occupies 23-64 (CSICLERYKNPKVLPCLHTFCERCLQNYIPAHSLTLSCPVCR). The segment at 113–154 (GKPLSCPNHDGNVMEFYCQSCETAMCRECTEGEHAEHPTVPL) adopts a B box-type zinc-finger fold. 4 residues coordinate Zn(2+): Cys-118, His-121, Cys-141, and His-146. The stretch at 320–421 (TTNAVASETV…IRGSPFKLKV (102 aa)) is one Filamin repeat. Thr-371 bears the Phosphothreonine mark. 3 positions are modified to phosphoserine: Ser-375, Ser-424, and Ser-428. The disordered stretch occupies residues 432-462 (EGVKRRVKSPGSGHVKQKAVKRPASMYSTGK). NHL repeat units lie at residues 473–516 (IFRV…FSND), 520–563 (KSRF…FSSD), 564–605 (GKFK…FQPN), 609–652 (VTRF…FNQE), 656–699 (MLKF…FDGS), and 700–743 (GSFL…YRYL).

This sequence belongs to the TRIM/RBCC family. Forms homooligomers. Interacts with TRIM3; this interaction reduces TRIM2 activity. Interacts with myosin V; myosin V may not be a substrate for ubiquitination. Interacts with NEFL. Interacts with phosphorylated BCL2L11. Interacts with SIRPA. In terms of processing, RING-type zinc finger-dependent and UBE2D1-dependent autoubiquitination.

It localises to the cytoplasm. The catalysed reaction is S-ubiquitinyl-[E2 ubiquitin-conjugating enzyme]-L-cysteine + [acceptor protein]-L-lysine = [E2 ubiquitin-conjugating enzyme]-L-cysteine + N(6)-ubiquitinyl-[acceptor protein]-L-lysine.. The protein operates within protein modification; protein ubiquitination. Functionally, UBE2D1-dependent E3 ubiquitin-protein ligase that mediates the ubiquitination of NEFL and of phosphorylated BCL2L11. Plays a neuroprotective function. May play a role in neuronal rapid ischemic tolerance. Plays a role in antiviral immunity and limits New World arenavirus infection independently of its ubiquitin ligase activity. The chain is Tripartite motif-containing protein 2 (TRIM2) from Homo sapiens (Human).